A 631-amino-acid chain; its full sequence is Probable potassium transport system protein Kup 1 (631 aa).

Transmembrane regions (helical) follow at residues 16-36 (LGLSLAALGVVYGDIGTSPLY), 58-78 (VLSLIVWALILIVSLKYLVFV), 109-129 (VLVFLGLFGAALLYGDGTLTP), 145-165 (PLFHPYIVPITVVILILLFLI), 173-193 (VGALFGPVMVLWFTVLALLGI), 219-239 (GWSGFQVLGAVFLVVTGGEAL), 255-275 (WFCCVLPALLLNYFGQGALLL), 288-308 (LAPPWALYPLVLLATLATIIA), 345-365 (IYIPAVNWALMLATITLVAGF), 370-390 (GLAAAYGVAVATTMVITALLV), 402-422 (PLAVAGLTVVFLTVDLAFFGA), and 427-447 (VGAGGWIPLAAGLAVFTVMIT).

This sequence belongs to the HAK/KUP transporter (TC 2.A.72) family.

The protein localises to the cell inner membrane. The catalysed reaction is K(+)(in) + H(+)(in) = K(+)(out) + H(+)(out). Its function is as follows. Transport of potassium into the cell. Likely operates as a K(+):H(+) symporter. This Geobacter sulfurreducens (strain ATCC 51573 / DSM 12127 / PCA) protein is Probable potassium transport system protein Kup 1.